Here is a 225-residue protein sequence, read N- to C-terminus: Uracil-DNA glycosylase (225 aa).

The active-site Proton acceptor is the Asp-68.

The protein belongs to the uracil-DNA glycosylase (UDG) superfamily. UNG family.

It is found in the cytoplasm. The catalysed reaction is Hydrolyzes single-stranded DNA or mismatched double-stranded DNA and polynucleotides, releasing free uracil.. In terms of biological role, excises uracil residues from the DNA which can arise as a result of misincorporation of dUMP residues by DNA polymerase or due to deamination of cytosine. This chain is Uracil-DNA glycosylase, found in Mycolicibacterium vanbaalenii (strain DSM 7251 / JCM 13017 / BCRC 16820 / KCTC 9966 / NRRL B-24157 / PYR-1) (Mycobacterium vanbaalenii).